Here is a 113-residue protein sequence, read N- to C-terminus: Iron-sulfur cluster insertion protein ErpA (113 aa).

Residues Cys-41, Cys-105, and Cys-107 each contribute to the iron-sulfur cluster site.

It belongs to the HesB/IscA family. In terms of assembly, homodimer. Requires iron-sulfur cluster as cofactor.

Required for insertion of 4Fe-4S clusters for at least IspG. The protein is Iron-sulfur cluster insertion protein ErpA of Hydrogenovibrio crunogenus (strain DSM 25203 / XCL-2) (Thiomicrospira crunogena).